Consider the following 79-residue polypeptide: Sigma-O factor regulatory protein RsoA (79 aa).

Together with RNA polymerase sigma factor SigO, positively regulates the expression of at least three operons, including oxdC-yvrL, sigO-rsoA and yvrJ. Required for the acid stress-dependent induction of the oxalate decarboxylase oxdC. The chain is Sigma-O factor regulatory protein RsoA (rsoA) from Bacillus subtilis (strain 168).